Reading from the N-terminus, the 523-residue chain is Polyamine aminopropyltransferase (523 aa).

A run of 7 helical transmembrane segments spans residues 20–40 (VLLAAVAACAACGLVYELALL), 51–71 (IVATSLIVAGYIAALGAGALL), 88–108 (AVLGIIGGLSAAALYAAFAFL), 116–136 (LVLAVGTALIGGLVGAEVPLL), 164–184 (LGALVGGLAWPFLLLPQLGMI), 186–206 (GAAVTGIVNLAAAGVVSIFLL), and 215–235 (LVTALCALAAALGLIATLLVH). Residues 203–478 (IFLLRHVVSG…APTPAVPSTA (276 aa)) are spermidine synthase. The region spanning 231–465 (TLLVHSHDIE…GDWGFALARL (235 aa)) is the PABS domain. S-methyl-5'-thioadenosine is bound at residue Gln-261. Asp-313 is a binding site for spermidine. Residues Glu-333 and 365-366 (DA) each bind S-methyl-5'-thioadenosine. Residue Asp-386 is the Proton acceptor of the active site.

The protein belongs to the spermidine/spermine synthase family. As to quaternary structure, homodimer or homotetramer.

The protein resides in the cell membrane. The enzyme catalyses S-adenosyl 3-(methylsulfanyl)propylamine + putrescine = S-methyl-5'-thioadenosine + spermidine + H(+). It participates in amine and polyamine biosynthesis; spermidine biosynthesis; spermidine from putrescine: step 1/1. Functionally, catalyzes the irreversible transfer of a propylamine group from the amino donor S-adenosylmethioninamine (decarboxy-AdoMet) to putrescine (1,4-diaminobutane) to yield spermidine. The polypeptide is Polyamine aminopropyltransferase (Mycobacterium bovis (strain ATCC BAA-935 / AF2122/97)).